The chain runs to 216 residues: V-type ATP synthase subunit D (216 aa).

It belongs to the V-ATPase D subunit family.

Functionally, produces ATP from ADP in the presence of a proton gradient across the membrane. This Clostridium botulinum (strain ATCC 19397 / Type A) protein is V-type ATP synthase subunit D.